Reading from the N-terminus, the 150-residue chain is UPF0756 membrane protein PC1_1142 (150 aa).

The next 4 helical transmembrane spans lie at 1 to 21 (MAYL…GIIS), 51 to 71 (YGLS…IASG), 82 to 102 (FLHW…WLGG), and 127 to 147 (ALFR…SLLI).

The protein belongs to the UPF0756 family.

It is found in the cell membrane. This is UPF0756 membrane protein PC1_1142 from Pectobacterium carotovorum subsp. carotovorum (strain PC1).